The following is a 149-amino-acid chain: Large ribosomal subunit protein uL13 (149 aa).

The protein belongs to the universal ribosomal protein uL13 family. As to quaternary structure, part of the 50S ribosomal subunit.

This protein is one of the early assembly proteins of the 50S ribosomal subunit, although it is not seen to bind rRNA by itself. It is important during the early stages of 50S assembly. In Chlorobium chlorochromatii (strain CaD3), this protein is Large ribosomal subunit protein uL13.